Consider the following 137-residue polypeptide: Ribonuclease VapC51 (137 aa).

The PINc domain occupies 5-120 (YLLDTSVIKR…HYDADFDLIA (116 aa)). Asp8 and Asp95 together coordinate Mg(2+).

The protein belongs to the PINc/VapC protein family. Mg(2+) is required as a cofactor.

Its function is as follows. Toxic component of a type II toxin-antitoxin (TA) system. An RNase. Its cognate antitoxin is VapB51. The chain is Ribonuclease VapC51 from Mycobacterium tuberculosis (strain ATCC 25618 / H37Rv).